The following is a 131-amino-acid chain: M-zodatoxin-Lt8m (131 aa).

Positions 1-20 (MKYFVVALALVAAFACIAES) are cleaved as a signal peptide. Residues 21-60 (KPAESEHELAEVEEENELADLEDAVWLEHLADLSDLEEAR) constitute a propeptide that is removed on maturation.

The protein belongs to the cationic peptide 06 (cytoinsectotoxin) family. In terms of tissue distribution, expressed by the venom gland.

The protein localises to the secreted. Insecticidal, cytolytic and antimicrobial peptide. Forms voltage-dependent, ion-permeable channels in membranes. At high concentration causes cell membrane lysis. This is M-zodatoxin-Lt8m (cit 1-13) from Lachesana tarabaevi (Spider).